The following is a 264-amino-acid chain: 3-methyl-2-oxobutanoate hydroxymethyltransferase (264 aa).

Residues D42 and D81 each contribute to the Mg(2+) site. 3-methyl-2-oxobutanoate-binding positions include 42-43, D81, and K110; that span reads DS. Mg(2+) is bound at residue E112. The Proton acceptor role is filled by E179.

This sequence belongs to the PanB family. As to quaternary structure, homodecamer; pentamer of dimers. The cofactor is Mg(2+).

The protein resides in the cytoplasm. The catalysed reaction is 3-methyl-2-oxobutanoate + (6R)-5,10-methylene-5,6,7,8-tetrahydrofolate + H2O = 2-dehydropantoate + (6S)-5,6,7,8-tetrahydrofolate. It functions in the pathway cofactor biosynthesis; (R)-pantothenate biosynthesis; (R)-pantoate from 3-methyl-2-oxobutanoate: step 1/2. Functionally, catalyzes the reversible reaction in which hydroxymethyl group from 5,10-methylenetetrahydrofolate is transferred onto alpha-ketoisovalerate to form ketopantoate. This is 3-methyl-2-oxobutanoate hydroxymethyltransferase from Francisella tularensis subsp. tularensis (strain FSC 198).